The following is a 439-amino-acid chain: Trigger factor (439 aa).

In terms of domain architecture, PPIase FKBP-type spans Gly-162–Pro-247.

Belongs to the FKBP-type PPIase family. Tig subfamily.

Its subcellular location is the cytoplasm. The enzyme catalyses [protein]-peptidylproline (omega=180) = [protein]-peptidylproline (omega=0). Functionally, involved in protein export. Acts as a chaperone by maintaining the newly synthesized protein in an open conformation. Functions as a peptidyl-prolyl cis-trans isomerase. This is Trigger factor from Dichelobacter nodosus (strain VCS1703A).